A 356-amino-acid polypeptide reads, in one-letter code: Protein RecA (356 aa).

An ATP-binding site is contributed by 68–75; the sequence is GQESSGKT.

Belongs to the RecA family.

It is found in the cytoplasm. In terms of biological role, can catalyze the hydrolysis of ATP in the presence of single-stranded DNA, the ATP-dependent uptake of single-stranded DNA by duplex DNA, and the ATP-dependent hybridization of homologous single-stranded DNAs. It interacts with LexA causing its activation and leading to its autocatalytic cleavage. This Thermotoga maritima (strain ATCC 43589 / DSM 3109 / JCM 10099 / NBRC 100826 / MSB8) protein is Protein RecA.